The following is a 338-amino-acid chain: GDSL esterase/lipase At5g63170 (338 aa).

The signal sequence occupies residues 1–23 (MNSLVIQTTIVLVSVISVSIVHA). Catalysis depends on Ser35, which acts as the Nucleophile. Catalysis depends on residues Asp313 and His316.

It belongs to the 'GDSL' lipolytic enzyme family.

It is found in the secreted. The polypeptide is GDSL esterase/lipase At5g63170 (Arabidopsis thaliana (Mouse-ear cress)).